Reading from the N-terminus, the 80-residue chain is UPF0154 protein SH1564 (80 aa).

The helical transmembrane segment at Trp-4–Leu-24 threads the bilayer.

Belongs to the UPF0154 family.

It is found in the membrane. In Staphylococcus haemolyticus (strain JCSC1435), this protein is UPF0154 protein SH1564.